We begin with the raw amino-acid sequence, 527 residues long: Methane monooxygenase component A alpha chain (527 aa).

Fe cation is bound by residues E114, E144, and H147. Residue C151 is part of the active site. Fe cation is bound by residues E209, E243, and H246.

This sequence belongs to the TmoA/XamoA family. In terms of assembly, m.capsulatus has two forms of methane monooxygenase, a soluble and a membrane-bound type. The soluble type consists of four components (A to D): protein A, comprising three chains, in an alpha-2, beta-2, gamma-2 configuration, is a nonheme iron protein containing an unusual mu-hydroxo bridge structure at its active site and interacts with both oxygen and methane. The cofactor is Fe cation.

It carries out the reaction methane + NADH + O2 + H(+) = methanol + NAD(+) + H2O. The enzyme catalyses methane + NADPH + O2 + H(+) = methanol + NADP(+) + H2O. In terms of biological role, responsible for the initial oxygenation of methane to methanol in methanotrophs. It also catalyzes the monohydroxylation of a variety of unactivated alkenes, alicyclic, aromatic and heterocyclic compounds. In Methylococcus capsulatus (strain ATCC 33009 / NCIMB 11132 / Bath), this protein is Methane monooxygenase component A alpha chain (mmoX).